A 469-amino-acid polypeptide reads, in one-letter code: A-type ATP synthase subunit B 3 (469 aa).

This sequence belongs to the ATPase alpha/beta chains family. In terms of assembly, has multiple subunits with at least A(3), B(3), C, D, E, F, H, I and proteolipid K(x).

The protein localises to the cell membrane. In terms of biological role, component of the A-type ATP synthase that produces ATP from ADP in the presence of a proton gradient across the membrane. The B chain is a regulatory subunit. This Methanospirillum hungatei JF-1 (strain ATCC 27890 / DSM 864 / NBRC 100397 / JF-1) protein is A-type ATP synthase subunit B 3.